We begin with the raw amino-acid sequence, 1366 residues long: MLSFVDTRTLLLLAVTLCLATCQSLQEETVRKGPAGDRGPRGERGPPGPPGRDGEDGPTGPPGPPGPPGPPGLGGNFAAQYDGKGVGLGPGPMGLMGPRGPPGAAGAPGPQGFQGPAGEPGEPGQTGPAGARGPAGPPGKAGEDGHPGKPGRPGERGVVGPQGARGFPGTPGLPGFKGIRGHNGLDGLKGQPGAPGVKGEPGAPGENGTPGQTGARGLPGERGRVGAPGPAGARGSDGSVGPVGPAGPIGSAGPPGFPGAPGPKGEIGAVGNAGPAGPAGPRGEVGLPGLSGPVGPPGNPGANGLTGAKGAAGLPGVAGAPGLPGPRGIPGPVGAAGATGARGLVGEPGPAGSKGESGNKGEPGSAGPQGPPGPSGEEGKRGPNGEAGSAGPPGPPGLRGSPGSRGLPGADGRAGVMGPPGSRGASGPAGVRGPNGDAGRPGEPGLMGPRGLPGSPGNIGPAGKEGPVGLPGIDGRPGPIGPAGARGEPGNIGFPGPKGPTGDPGKNGDKGHAGLAGARGAPGPDGNNGAQGPPGPQGVQGGKGEQGPPGPPGFQGLPGPSGPAGEVGKPGERGLHGEFGLPGPAGPRGERGPPGESGAAGPTGPIGSRGPSGPPGPDGNKGEPGVVGAVGTAGPSGPSGLPGERGAAGIPGGKGEKGEPGLRGEIGNPGRDGARGAPGAVGAPGPAGATGDRGEAGAAGPAGPAGPRGSPGERGEVGPAGPNGFAGPAGAAGQPGAKGERGAKGPKGENGVVGPTGPVGAAGPAGPNGPPGPAGSRGDGGPPGMTGFPGAAGRTGPPGPSGISGPPGPPGPAGKEGLRGPRGDQGPVGRTGEVGAVGPPGFAGEKGPSGEAGTAGPPGTPGPQGLLGAPGILGLPGSRGERGLPGVAGAVGEPGPLGIAGPPGARGPPGAVGSPGVNGAPGEAGRDGNPGNDGPPGRDGQPGHKGERGYPGNIGPVGAAGAPGPHGPVGPAGKHGNRGETGPSGPVGPAGAVGPRGPSGPQGIRGDKGEPGEKGPRGLPGLKGHNGLQGLPGIAGHHGDQGAPGSVGPAGPRGPAGPSGPAGKDGRTGHPGTVGPAGIRGPQGHQGPAGPPGPPGPPGPPGVSGGGYDFGYDGDFYRADQPRSAPSLRPKDYEVDATLKSLNNQIETLLTPEGSRKNPARTCRDLRLSHPEWSSGYYWIDPNQGCTMDAIKVYCDFSTGETCIRAQPENIPAKNWYRSSKDKKHVWLGETINAGSQFEYNVEGVTSKEMATQLAFMRLLANYASQNITYHCKNSIAYMDEETGNLKKAVILQGSNDVELVAEGNSRFTYTVLVDGCSKKTNEWGKTIIEYKTNKPSRLPFLDIAPLDIGGADQEFFVDIGPVCFK.

Residues 1-22 (MLSFVDTRTLLLLAVTLCLATC) form the signal peptide. Position 23 is a pyrrolidone carboxylic acid (Gln-23). Positions 23–79 (QSLQEETVRKGPAGDRGPRGERGPPGPPGRDGEDGPTGPPGPPGPPGPPGLGGNFAA) are cleaved as a propeptide — N-terminal propeptide. The span at 28–44 (ETVRKGPAGDRGPRGER) shows a compositional bias: basic and acidic residues. The tract at residues 28 to 1130 (ETVRKGPAGD…QPRSAPSLRP (1103 aa)) is disordered. 6 positions are modified to 4-hydroxyproline: Pro-47, Pro-50, Pro-62, Pro-65, Pro-68, and Pro-71. Residues 59–71 (TGPPGPPGPPGPP) show a composition bias toward pro residues. Gln-80 is subject to Pyrrolidone carboxylic acid. Lys-84 carries the allysine modification. Gly residues predominate over residues 84 to 94 (KGVGLGPGPMG). The span at 95 to 140 (LMGPRGPPGAAGAPGPQGFQGPAGEPGEPGQTGPAGARGPAGPPGK) shows a compositional bias: low complexity. 4-hydroxyproline is present on residues Pro-102 and Pro-108. Over residues 141-155 (AGEDGHPGKPGRPGE) the composition is skewed to basic and acidic residues. The residue at position 177 (Lys-177) is a 5-hydroxylysine; alternate. Lys-177 is a glycosylation site (O-linked (Gal...) hydroxylysine; alternate). 6 stretches are compositionally biased toward low complexity: residues 225–254 (VGAPGPAGARGSDGSVGPVGPAGPIGSAGP), 269–293 (AVGNAGPAGPAGPRGEVGLPGLSGP), 300–321 (PGANGLTGAKGAAGLPGVAGAP), 330–345 (PGPVGAAGATGARGLV), 398–410 (LRGSPGSRGLPGA), and 419–434 (PPGSRGASGPAGVRGP). 4-hydroxyproline is present on residues Pro-420, Pro-441, and Pro-444. 2 stretches are compositionally biased toward low complexity: residues 470–489 (LPGIDGRPGPIGPAGARGEP) and 513–531 (AGLAGARGAPGPDGNNGAQ). Residues 538-547 (GVQGGKGEQG) are compositionally biased toward gly residues. Composition is skewed to low complexity over residues 594–611 (PGESGAAGPTGPIGSRGP), 623–648 (EPGVVGAVGTAGPSGPSGLPGERGAA), 663–710 (RGEI…PRGS), and 717–737 (VGPAGPNGFAGPAGAAGQPGA). The segment covering 738-747 (KGERGAKGPK) has biased composition (basic and acidic residues). Positions 752 to 765 (VVGPTGPVGAAGPA) are enriched in low complexity. Over residues 775–784 (GSRGDGGPPG) the composition is skewed to gly residues. Low complexity-rich tracts occupy residues 786–795 (TGFPGAAGRT), 849–876 (SGEAGTAGPPGTPGPQGLLGAPGILGLP), 884–932 (LPGV…NPGN), 956–974 (PVGAAGAPGPHGPVGPAGK), and 983–1001 (PSGPVGPAGAVGPRGPSGP). Residues 1005 to 1016 (RGDKGEPGEKGP) are compositionally biased toward basic and acidic residues. Pro residues predominate over residues 1089 to 1101 (AGPPGPPGPPGPP). A propeptide spans 1120 to 1366 (DQPRSAPSLR…FVDIGPVCFK (247 aa)) (C-terminal propeptide). Residues 1133–1366 (YEVDATLKSL…FVDIGPVCFK (234 aa)) form the Fibrillar collagen NC1 domain. Disulfide bonds link Cys-1163/Cys-1195, Cys-1203/Cys-1364, and Cys-1272/Cys-1317. Ca(2+) contacts are provided by Asp-1181, Asn-1183, Gln-1184, Cys-1186, and Asp-1189. Asn-1267 is a glycosylation site (N-linked (GlcNAc...) asparagine).

The protein belongs to the fibrillar collagen family. As to quaternary structure, trimers of one alpha 2(I) and two alpha 1(I) chains. Interacts (via C-terminus) with TMEM131 (via PapD-L domain); the interaction is direct and is involved in assembly and TRAPPIII ER-to-Golgi transport complex-dependent secretion of collagen. Post-translationally, prolines at the third position of the tripeptide repeating unit (G-X-Y) are hydroxylated in some or all of the chains. Forms the fibrils of tendon, ligaments and bones. In bones the fibrils are mineralized with calcium hydroxyapatite.

The protein localises to the secreted. The protein resides in the extracellular space. It is found in the extracellular matrix. Its function is as follows. Type I collagen is a member of group I collagen (fibrillar forming collagen). The polypeptide is Collagen alpha-2(I) chain (COL1A2) (Homo sapiens (Human)).